The following is a 557-amino-acid chain: DNA ligase (557 aa).

Glu251 is an ATP binding site. The active-site N6-AMP-lysine intermediate is the Lys253. The ATP site is built by Arg258, Arg273, Glu303, Phe342, Arg418, and Lys424.

The protein belongs to the ATP-dependent DNA ligase family. The cofactor is Mg(2+).

The enzyme catalyses ATP + (deoxyribonucleotide)n-3'-hydroxyl + 5'-phospho-(deoxyribonucleotide)m = (deoxyribonucleotide)n+m + AMP + diphosphate.. Functionally, DNA ligase that seals nicks in double-stranded DNA during DNA replication, DNA recombination and DNA repair. The chain is DNA ligase from Methanosphaera stadtmanae (strain ATCC 43021 / DSM 3091 / JCM 11832 / MCB-3).